The following is a 316-amino-acid chain: 4-hydroxy-3-methylbut-2-enyl diphosphate reductase (316 aa).

Cys-12 contacts [4Fe-4S] cluster. (2E)-4-hydroxy-3-methylbut-2-enyl diphosphate contacts are provided by His-41 and His-74. Dimethylallyl diphosphate-binding residues include His-41 and His-74. Isopentenyl diphosphate contacts are provided by His-41 and His-74. Position 96 (Cys-96) interacts with [4Fe-4S] cluster. His-124 is a (2E)-4-hydroxy-3-methylbut-2-enyl diphosphate binding site. His-124 contributes to the dimethylallyl diphosphate binding site. His-124 is a binding site for isopentenyl diphosphate. The Proton donor role is filled by Glu-126. Thr-167 lines the (2E)-4-hydroxy-3-methylbut-2-enyl diphosphate pocket. Cys-197 is a binding site for [4Fe-4S] cluster. 4 residues coordinate (2E)-4-hydroxy-3-methylbut-2-enyl diphosphate: Ser-225, Ser-226, Asn-227, and Ser-269. 4 residues coordinate dimethylallyl diphosphate: Ser-225, Ser-226, Asn-227, and Ser-269. The isopentenyl diphosphate site is built by Ser-225, Ser-226, Asn-227, and Ser-269.

The protein belongs to the IspH family. As to quaternary structure, homodimer. [4Fe-4S] cluster serves as cofactor.

It catalyses the reaction isopentenyl diphosphate + 2 oxidized [2Fe-2S]-[ferredoxin] + H2O = (2E)-4-hydroxy-3-methylbut-2-enyl diphosphate + 2 reduced [2Fe-2S]-[ferredoxin] + 2 H(+). The catalysed reaction is dimethylallyl diphosphate + 2 oxidized [2Fe-2S]-[ferredoxin] + H2O = (2E)-4-hydroxy-3-methylbut-2-enyl diphosphate + 2 reduced [2Fe-2S]-[ferredoxin] + 2 H(+). It participates in isoprenoid biosynthesis; dimethylallyl diphosphate biosynthesis; dimethylallyl diphosphate from (2E)-4-hydroxy-3-methylbutenyl diphosphate: step 1/1. The protein operates within isoprenoid biosynthesis; isopentenyl diphosphate biosynthesis via DXP pathway; isopentenyl diphosphate from 1-deoxy-D-xylulose 5-phosphate: step 6/6. Catalyzes the conversion of 1-hydroxy-2-methyl-2-(E)-butenyl 4-diphosphate (HMBPP) into a mixture of isopentenyl diphosphate (IPP) and dimethylallyl diphosphate (DMAPP). Acts in the terminal step of the DOXP/MEP pathway for isoprenoid precursor biosynthesis. This chain is 4-hydroxy-3-methylbut-2-enyl diphosphate reductase, found in Pectobacterium atrosepticum (strain SCRI 1043 / ATCC BAA-672) (Erwinia carotovora subsp. atroseptica).